A 369-amino-acid chain; its full sequence is Ferrochelatase (369 aa).

The Fe cation site is built by histidine 210 and glutamate 291.

Belongs to the ferrochelatase family.

The protein resides in the cytoplasm. It carries out the reaction heme b + 2 H(+) = protoporphyrin IX + Fe(2+). Its pathway is porphyrin-containing compound metabolism; protoheme biosynthesis; protoheme from protoporphyrin-IX: step 1/1. Its function is as follows. Catalyzes the ferrous insertion into protoporphyrin IX. The polypeptide is Ferrochelatase (Thioalkalivibrio sulfidiphilus (strain HL-EbGR7)).